The sequence spans 435 residues: MNIKNILWFTLKKLSNLSLSISLLLLIASISIIGTIIEQNQSIVYYQMNYPINNQPFGRIMNWKIILNLGLDHIYLNPCFVLVLVLFFCSLLACTFSNQLPSLRNARKWKFLQYKNHINCNNHFVELDKISICNIIYSLYSNNYYIFHKENNIYAYKGLSGRIAPIVVHFSIILTFIGSLISLLGGFTAQEIIPTGEIFHIKNIIQSGFNSEIPNNITGKIKDFDIKYGPDNSVEQFVSKIIIYNNQGKNINQKQVSVNSPLILKGITFYQTDWKIDTLRFKIGNSKIIQQPIIKYKINNQILWSCRLPLNKEKYIFLVIANLNDKISIYDISNNLLTSIKLDETIVVNNTTLKIVEIMTKTGIQVKTDPGIIVTYTGFFILMLSIVISYISYSQIWVTSIIQNIKIAGSTNRATLTFEEEIINIQEIYTQYTWS.

Transmembrane regions (helical) follow at residues 17-37, 77-97, and 163-183; these read LSLS…GTII, NPCF…CTFS, and IAPI…LISL.

Belongs to the Ccs1/CcsB family. May interact with CcsA.

It is found in the plastid. Its subcellular location is the chloroplast thylakoid membrane. In terms of biological role, required during biogenesis of c-type cytochromes (cytochrome c6 and cytochrome f) at the step of heme attachment. This Gracilaria tenuistipitata var. liui (Red alga) protein is Cytochrome c biogenesis protein Ccs1.